The sequence spans 20 residues: ADDINPKEECFFEDDYYEFE.

The protein belongs to the flavin monoamine oxidase family. FIG1 subfamily. As to quaternary structure, monomer. This is in contrast with most of its orthologs, that are non-covalently linked homodimers. FAD is required as a cofactor. In terms of processing, N-glycosylated. Expressed by the venom gland.

The protein resides in the secreted. The catalysed reaction is an L-alpha-amino acid + O2 + H2O = a 2-oxocarboxylate + H2O2 + NH4(+). It catalyses the reaction L-leucine + O2 + H2O = 4-methyl-2-oxopentanoate + H2O2 + NH4(+). The enzyme catalyses L-phenylalanine + O2 + H2O = 3-phenylpyruvate + H2O2 + NH4(+). It carries out the reaction L-tryptophan + O2 + H2O = indole-3-pyruvate + H2O2 + NH4(+). The catalysed reaction is L-methionine + O2 + H2O = 4-methylsulfanyl-2-oxobutanoate + H2O2 + NH4(+). It catalyses the reaction L-isoleucine + O2 + H2O = (S)-3-methyl-2-oxopentanoate + H2O2 + NH4(+). The enzyme catalyses L-tyrosine + O2 + H2O = 3-(4-hydroxyphenyl)pyruvate + H2O2 + NH4(+). Its function is as follows. Catalyzes an oxidative deamination of predominantly hydrophobic and aromatic L-amino acids, thus producing hydrogen peroxide that may contribute to the diverse toxic effects of this enzyme. Is active on L-Met, L-Ile, L-Leu, L-Phe, L-Trp, and L-Tyr. Exhibits diverse biological activities, such as hemorrhage, hemolysis, edema, apoptosis of vascular endothelial cells or tumor cell lines, antibacterial and antiparasitic activities, as well as regulation of platelet aggregation. Its effect on platelets is controversial, since it either induces aggregation or inhibits agonist-induced aggregation. These different effects are probably due to different experimental conditions. The polypeptide is L-amino-acid oxidase L1 (Daboia russelii (Russel's viper)).